The chain runs to 276 residues: Large ribosomal subunit protein uL2 (276 aa).

The tract at residues 224-276 is disordered; the sequence is AMNPIDHPHGGGEGKTSGGRNPVTPWGVPTKGKKTRKRNKSSNKYIKRVSDKG. The segment covering 254–270 has biased composition (basic residues); that stretch reads KGKKTRKRNKSSNKYIK.

The protein belongs to the universal ribosomal protein uL2 family. In terms of assembly, part of the 50S ribosomal subunit. Forms a bridge to the 30S subunit in the 70S ribosome.

Its function is as follows. One of the primary rRNA binding proteins. Required for association of the 30S and 50S subunits to form the 70S ribosome, for tRNA binding and peptide bond formation. It has been suggested to have peptidyltransferase activity; this is somewhat controversial. Makes several contacts with the 16S rRNA in the 70S ribosome. The sequence is that of Large ribosomal subunit protein uL2 from Ehrlichia chaffeensis (strain ATCC CRL-10679 / Arkansas).